The following is a 258-amino-acid chain: Type III pantothenate kinase (258 aa).

6 to 13 lines the ATP pocket; the sequence is DVGNTNIV. Residues Tyr-100 and 107 to 110 each bind substrate; that span reads GADR. Asp-109 (proton acceptor) is an active-site residue. Residue Asp-129 participates in K(+) binding. Thr-132 is a binding site for ATP. Thr-184 provides a ligand contact to substrate.

It belongs to the type III pantothenate kinase family. Homodimer. NH4(+) serves as cofactor. The cofactor is K(+).

It localises to the cytoplasm. It catalyses the reaction (R)-pantothenate + ATP = (R)-4'-phosphopantothenate + ADP + H(+). Its pathway is cofactor biosynthesis; coenzyme A biosynthesis; CoA from (R)-pantothenate: step 1/5. Its function is as follows. Catalyzes the phosphorylation of pantothenate (Pan), the first step in CoA biosynthesis. The sequence is that of Type III pantothenate kinase from Desulfitobacterium hafniense (strain DSM 10664 / DCB-2).